We begin with the raw amino-acid sequence, 603 residues long: NADPH-dependent diflavin oxidoreductase 1 (603 aa).

The 146-residue stretch at 10 to 155 (VTILYGSETG…YYSEWETNLL (146 aa)) folds into the Flavodoxin-like domain. Residues 16–21 (SETGNA), 64–67 (STTG), 102–111 (IGDSSYPKFN), and Glu137 contribute to the FMN site. The 243-residue stretch at 209 to 451 (TNLLLGSVKA…HKSNLKFELP (243 aa)) folds into the FAD-binding FR-type domain. Residues Arg359, 390-393 (RLFS), and 422-425 (GLCT) each bind FAD. NADP(+) contacts are provided by residues Thr465 and 521–522 (SR). Trp603 is an FAD binding site.

It belongs to the NADPH-dependent diflavin oxidoreductase NDOR1 family. The protein in the N-terminal section; belongs to the flavodoxin family. In the C-terminal section; belongs to the flavoprotein pyridine nucleotide cytochrome reductase family. In terms of assembly, interacts with DRE2; as part of the cytosolic iron-sulfur (Fe-S) protein assembly (CIA) machinery. FAD is required as a cofactor. Requires FMN as cofactor.

It localises to the cytoplasm. The protein localises to the mitochondrion. It catalyses the reaction 2 oxidized [2Fe-2S]-[protein] + NADPH = 2 reduced [2Fe-2S]-[protein] + NADP(+) + H(+). In terms of biological role, NADPH-dependent reductase which is a central component of the cytosolic iron-sulfur (Fe-S) protein assembly (CIA) machinery. Transfers electrons from NADPH via its FAD and FMN prosthetic groups to the [2Fe-2S] cluster of DRE2, another key component of the CIA machinery. In turn, this reduced cluster provides electrons for assembly of cytosolic iron-sulfur cluster proteins. Positively controls H(2)O(2)-induced cell death. The protein is NADPH-dependent diflavin oxidoreductase 1 of Debaryomyces hansenii (strain ATCC 36239 / CBS 767 / BCRC 21394 / JCM 1990 / NBRC 0083 / IGC 2968) (Yeast).